The primary structure comprises 226 residues: Cytochrome c biogenesis ATP-binding export protein CcmA (226 aa).

The ABC transporter domain maps to 19–226 (LRANDLAFSR…LGGAHALPPA (208 aa)). 51–58 (GPNGSGKS) is an ATP binding site.

It belongs to the ABC transporter superfamily. CcmA exporter (TC 3.A.1.107) family. In terms of assembly, the complex is composed of two ATP-binding proteins (CcmA) and two transmembrane proteins (CcmB).

Its subcellular location is the cell inner membrane. The enzyme catalyses heme b(in) + ATP + H2O = heme b(out) + ADP + phosphate + H(+). In terms of biological role, part of the ABC transporter complex CcmAB involved in the biogenesis of c-type cytochromes; once thought to export heme, this seems not to be the case, but its exact role is uncertain. Responsible for energy coupling to the transport system. The chain is Cytochrome c biogenesis ATP-binding export protein CcmA from Cupriavidus pinatubonensis (strain JMP 134 / LMG 1197) (Cupriavidus necator (strain JMP 134)).